We begin with the raw amino-acid sequence, 137 residues long: Maltose regulon regulatory protein MalI (137 aa).

The HTH lacI-type domain occupies 6–60; that stretch reads VTITEVAKHAGVSVTTVSMVLGNKGRISPDTIEKVNASVEALGYIRNRAAANLRS. A DNA-binding region (H-T-H motif) is located at residues 8–27; it reads ITEVAKHAGVSVTTVSMVLG.

Repressor for the malX and malY genes. This is Maltose regulon regulatory protein MalI (malI) from Vibrio furnissii.